Reading from the N-terminus, the 341-residue chain is Small ribosomal subunit biogenesis GTPase RsgA (341 aa).

One can recognise a CP-type G domain in the interval 112–268 (RQQLIAANLD…LIDTPGMREL (157 aa)). Residues 157 to 160 (TKVD) and 210 to 218 (GSSGAGKST) contribute to the GTP site. 4 residues coordinate Zn(2+): Cys-290, Cys-295, His-297, and Cys-303.

It belongs to the TRAFAC class YlqF/YawG GTPase family. RsgA subfamily. As to quaternary structure, monomer. Associates with 30S ribosomal subunit, binds 16S rRNA. The cofactor is Zn(2+).

The protein localises to the cytoplasm. In terms of biological role, one of several proteins that assist in the late maturation steps of the functional core of the 30S ribosomal subunit. Helps release RbfA from mature subunits. May play a role in the assembly of ribosomal proteins into the subunit. Circularly permuted GTPase that catalyzes slow GTP hydrolysis, GTPase activity is stimulated by the 30S ribosomal subunit. This is Small ribosomal subunit biogenesis GTPase RsgA from Xylella fastidiosa (strain 9a5c).